Reading from the N-terminus, the 252-residue chain is 3-dehydroquinate dehydratase (252 aa).

3-dehydroquinate is bound by residues Ser21, 46 to 48, and Arg82; that span reads EWR. Catalysis depends on His143, which acts as the Proton donor/acceptor. Residue Lys170 is the Schiff-base intermediate with substrate of the active site. Positions 213, 232, and 236 each coordinate 3-dehydroquinate.

Belongs to the type-I 3-dehydroquinase family. Homodimer.

The catalysed reaction is 3-dehydroquinate = 3-dehydroshikimate + H2O. The protein operates within metabolic intermediate biosynthesis; chorismate biosynthesis; chorismate from D-erythrose 4-phosphate and phosphoenolpyruvate: step 3/7. Functionally, involved in the third step of the chorismate pathway, which leads to the biosynthesis of aromatic amino acids. Catalyzes the cis-dehydration of 3-dehydroquinate (DHQ) and introduces the first double bond of the aromatic ring to yield 3-dehydroshikimate. This Escherichia coli O17:K52:H18 (strain UMN026 / ExPEC) protein is 3-dehydroquinate dehydratase.